The chain runs to 604 residues: Aspartate--tRNA(Asp/Asn) ligase (604 aa).

Glu177 is an L-aspartate binding site. Residues 201 to 204 (QLFK) form an aspartate region. L-aspartate is bound at residue Arg223. ATP is bound by residues 223–225 (RDE) and Gln232. His457 contributes to the L-aspartate binding site. An ATP-binding site is contributed by Glu495. Arg502 serves as a coordination point for L-aspartate. 547 to 550 (GLDR) provides a ligand contact to ATP.

Belongs to the class-II aminoacyl-tRNA synthetase family. Type 1 subfamily. In terms of assembly, homodimer.

The protein localises to the cytoplasm. The enzyme catalyses tRNA(Asx) + L-aspartate + ATP = L-aspartyl-tRNA(Asx) + AMP + diphosphate. In terms of biological role, aspartyl-tRNA synthetase with relaxed tRNA specificity since it is able to aspartylate not only its cognate tRNA(Asp) but also tRNA(Asn). Reaction proceeds in two steps: L-aspartate is first activated by ATP to form Asp-AMP and then transferred to the acceptor end of tRNA(Asp/Asn). The chain is Aspartate--tRNA(Asp/Asn) ligase from Synechococcus sp. (strain RCC307).